The chain runs to 262 residues: Methionine-rich nacre protein (262 aa).

An N-terminal signal peptide occupies residues 1-22 (MSIMRRILCLAVVIFIINDVSS). The segment covering 26–35 (GNNKNWKKNG) has biased composition (low complexity). Residues 26-84 (GNNKNWKKNGMSLSSPGNKKPTGNNAVPQKSKMNNMNQNSLSQPKRSSPPGNSMYNMAN) form a disordered region. The segment covering 36–84 (MSLSSPGNKKPTGNNAVPQKSKMNNMNQNSLSQPKRSSPPGNSMYNMAN) has biased composition (polar residues).

In terms of tissue distribution, expressed in mantle and, after secretion, incorporated into acid-insoluble nacre matrix of the shell (at protein level). Expressed primarily in the mantle with highest level in the mantle pallium and lower level in the mantle edge.

It is found in the secreted. This Pinctada maxima (Silver-lipped pearl oyster) protein is Methionine-rich nacre protein.